The following is a 183-amino-acid chain: DNA-directed RNA polymerase subunit Rpo7 (183 aa).

An S1 motif domain is found at 82-164 (HEVIEGEVSQ…RLPRIALTMK (83 aa)).

The protein belongs to the eukaryotic RPB7/RPC8 RNA polymerase subunit family. Part of the 13-subunit RNA polymerase complex. Forms a stalk with Rpo4 that extends from the main structure.

It localises to the cytoplasm. The enzyme catalyses RNA(n) + a ribonucleoside 5'-triphosphate = RNA(n+1) + diphosphate. DNA-dependent RNA polymerase (RNAP) catalyzes the transcription of DNA into RNA using the four ribonucleoside triphosphates as substrates. Its function is as follows. Reconstitution experiments show this subunit is required for basic activity. The chain is DNA-directed RNA polymerase subunit Rpo7 from Sulfolobus acidocaldarius (strain ATCC 33909 / DSM 639 / JCM 8929 / NBRC 15157 / NCIMB 11770).